The sequence spans 254 residues: Segregation and condensation protein A (254 aa).

Belongs to the ScpA family. Component of a cohesin-like complex composed of ScpA, ScpB and the Smc homodimer, in which ScpA and ScpB bind to the head domain of Smc. The presence of the three proteins is required for the association of the complex with DNA.

Its subcellular location is the cytoplasm. Functionally, participates in chromosomal partition during cell division. May act via the formation of a condensin-like complex containing Smc and ScpB that pull DNA away from mid-cell into both cell halves. This is Segregation and condensation protein A from Brevibacillus brevis (strain 47 / JCM 6285 / NBRC 100599).